Consider the following 157-residue polypeptide: Cyclic pyranopterin monophosphate synthase (157 aa).

Substrate is bound by residues 74–76 (MCH) and 111–112 (ME). The active site involves D126.

The protein belongs to the MoaC family. In terms of assembly, homohexamer; trimer of dimers.

The catalysed reaction is (8S)-3',8-cyclo-7,8-dihydroguanosine 5'-triphosphate = cyclic pyranopterin phosphate + diphosphate. It functions in the pathway cofactor biosynthesis; molybdopterin biosynthesis. In terms of biological role, catalyzes the conversion of (8S)-3',8-cyclo-7,8-dihydroguanosine 5'-triphosphate to cyclic pyranopterin monophosphate (cPMP). This Carboxydothermus hydrogenoformans (strain ATCC BAA-161 / DSM 6008 / Z-2901) protein is Cyclic pyranopterin monophosphate synthase.